We begin with the raw amino-acid sequence, 424 residues long: SWI/SNF and RSC complexes subunit arp42 (424 aa).

This sequence belongs to the actin family. Component of the RSC complex composed of at least arp9, arp42, rsc1, rsc4, rsc7, rsc9, rsc58, sfh1, snf21, ssr1, ssr2, ssr3 and ssr4. The complex interacts with histone and histone variant components of centromeric chromatin. Component of the SWI/SNF global transcription activator complex composed of at least arp9, arp42, snf5, snf22, snf30, sbf59, sol1, ssr1, ssr2, ssr3, ssr4 and tfg3.

It is found in the cytoplasm. The protein resides in the nucleus. Its function is as follows. Component of the chromatin structure remodeling complex (RSC), which is involved in transcription regulation and nucleosome positioning. Controls particularly membrane and organelle development genes. Part of the SWI/SNF complex, an ATP-dependent chromatin remodeling complex, required for the positive and negative regulation of gene expression of a large number of genes. It changes chromatin structure by altering DNA-histone contacts within a nucleosome, leading eventually to a change in nucleosome position, thus facilitating or repressing binding of gene-specific transcription factors. This Schizosaccharomyces pombe (strain 972 / ATCC 24843) (Fission yeast) protein is SWI/SNF and RSC complexes subunit arp42 (arp42).